The primary structure comprises 507 residues: MKVTIRINGDVLSAYIPKKDLEEPIISVANEDLWGGSILLRNGWRLALPHLPQEARLPVTVEARRMFGRLDRGAHEKPDRMTRIGEISSSQDAAAMLAENQKMHPWPALTRTAYEDVAACISSGELSGSGLGIINAFERRMEEWIGGGYVVSASSGTAALTVALIALGIQPGDVVLLPSYTWAATALAPLLIGAIPRFVDIDPNSYNISPTALAAAITPDVKAIIVVHMHGISCDMDEIICHAREQGIAVIEDCAQAHGALYKGQHVGLLSDIGCFSMQKSKHLSAGDGGFMVTRDPTLAQKMRDICNFGLPTPKANYRFDEVVRDGYAVFRECEQIGGMFRLQPMSAALVMHQLEHLRQRIAWLQTAMEPLVEESAKIPFFKITRSHVDRTHVWHKIRVGIDYAAVDYFGRSMAEIRRGLRNSLAERGISSTLWTAPILPLQTAFRPYAGVVEWTKSAGHLAIENSFIVFDENYPLIAQEPAKMAELVVKLQQAWDEHFTSLARGK.

Positions 256–275 (QAHGALYKGQHVGLLSDIGC) form a DNA-binding region, H-T-H motif. At lysine 282 the chain carries N6-(pyridoxal phosphate)lysine.

Belongs to the DegT/DnrJ/EryC1 family.

Functionally, involved in the biosynthesis of the rhizopine 3-O-methyl-scyllo-inosamine. May have a regulatory role in controlling the housekeeping genes within the nodule which are involved in the biosynthesis of the rhizopine backbone. This chain is Protein MosB (mosB), found in Rhizobium meliloti (Ensifer meliloti).